A 45-amino-acid polypeptide reads, in one-letter code: Turripeptide OL11-like (45 aa).

3 disulfides stabilise this stretch: C1-C31, C5-C24, and C13-C45. Residues C1 to C45 form the Kazal-like domain.

This sequence belongs to the conopeptide P-like superfamily. As to expression, expressed by the venom duct.

The protein resides in the secreted. Its function is as follows. Acts as a neurotoxin by inhibiting an ion channel. May also act as a serine protease inhibitor, since it possess the kazal serine protease inhibitor signature. In Lophiotoma albina (Sea snail), this protein is Turripeptide OL11-like.